Consider the following 779-residue polypeptide: Mediator of RNA polymerase II transcription subunit 15 (779 aa).

Polar residues-rich tracts occupy residues N70 to G90 and A98 to R108. 4 disordered regions span residues N70–A131, N209–G407, F437–E512, and P629–Q649. Gly residues predominate over residues G114–N130. Low complexity-rich tracts occupy residues N209–G232 and P240–Q270. Residues S274 to G284 are compositionally biased toward gly residues. Composition is skewed to low complexity over residues G285–G295, Q304–Q329, and G339–V350. Over residues G351–G361 the composition is skewed to gly residues. Composition is skewed to low complexity over residues N362–Q383, N393–N402, and G451–P468. Composition is skewed to polar residues over residues Q477–G500 and P640–Q649.

This sequence belongs to the Mediator complex subunit 15 family. As to quaternary structure, component of the Mediator complex.

It is found in the nucleus. Functionally, component of the Mediator complex, a coactivator involved in the regulated transcription of nearly all RNA polymerase II-dependent genes. Mediator functions as a bridge to convey information from gene-specific regulatory proteins to the basal RNA polymerase II transcription machinery. Mediator is recruited to promoters by direct interactions with regulatory proteins and serves as a scaffold for the assembly of a functional preinitiation complex with RNA polymerase II and the general transcription factors. This Aedes aegypti (Yellowfever mosquito) protein is Mediator of RNA polymerase II transcription subunit 15 (MED15).